A 421-amino-acid polypeptide reads, in one-letter code: Histidine--tRNA ligase (421 aa).

This sequence belongs to the class-II aminoacyl-tRNA synthetase family. As to quaternary structure, homodimer.

The protein resides in the cytoplasm. It carries out the reaction tRNA(His) + L-histidine + ATP = L-histidyl-tRNA(His) + AMP + diphosphate + H(+). This Francisella tularensis subsp. holarctica (strain FTNF002-00 / FTA) protein is Histidine--tRNA ligase.